The following is a 431-amino-acid chain: Pheromone alpha factor receptor (431 aa).

Over 1–49 (MSDAAPSLSNLFYDPTYNPGQSTINYTSIYGNGSTITFDELQGLVNSTV) the chain is Extracellular. 2 N-linked (GlcNAc...) asparagine glycosylation sites follow: N25 and N32. A helical transmembrane segment spans residues 50–72 (TQAIMFGVRCGAAALTLIVMWMT). Residues 53–61 (IMFGVRCGA) carry the Glycine zipper motif motif. At 73-78 (SRSRKT) the chain is on the cytoplasmic side. Residues 79 to 102 (PIFIINQVSLFLIILHSALYFKYL) traverse the membrane as a helical segment. Residues 103-132 (LSNYSSVTYALTGFPQFISRGDVHVYGATN) are Extracellular-facing. The helical transmembrane segment at 133 to 156 (IIQVLLVASIETSLVFQIKVIFTG) threads the bilayer. Residues 157–163 (DNFKRIG) lie on the Cytoplasmic side of the membrane. Residues 164–188 (LMLTSISFTLGIATVTMYFVSAVKG) form a helical membrane-spanning segment. Topologically, residues 189–205 (MIVTYNDVSATQDKYFN) are extracellular. Residues 206–230 (ASTILLASSINFMSFVLVVKLILAI) traverse the membrane as a helical segment. Residues 231 to 241 (RSRRFLGLKQF) are Cytoplasmic-facing. Residues 242–266 (DSFHILLIMSCQSLLVPSIIFILAY) traverse the membrane as a helical segment. Topologically, residues 267-275 (SLKPNQGTD) are extracellular. A helical transmembrane segment spans residues 276–299 (VLTTVATLLAVLSLPLSSMWATAA). Topologically, residues 300 to 431 (NNASKTNTIT…KFWTEDNNNL (132 aa)) are cytoplasmic. Phosphoserine is present on residues S310 and S315. Position 329 is a phosphothreonine (T329). Position 331 is a phosphoserine (S331). K337 is covalently cross-linked (Glycyl lysine isopeptide (Lys-Gly) (interchain with G-Cter in ubiquitin)). S360 is subject to Phosphoserine. At T363 the chain carries Phosphothreonine. S366 is modified (phosphoserine). K374 is covalently cross-linked (Glycyl lysine isopeptide (Lys-Gly) (interchain with G-Cter in ubiquitin)). Positions 379–389 (QLPTPTSSKNT) are enriched in polar residues. The disordered stretch occupies residues 379 to 406 (QLPTPTSSKNTRIGPFADASYKEGEVEP). T382 carries the post-translational modification Phosphothreonine. S385 and S386 each carry phosphoserine. A Glycyl lysine isopeptide (Lys-Gly) (interchain with G-Cter in ubiquitin) cross-link involves residue K400. Residues T411 and T414 each carry the phosphothreonine modification. K422 participates in a covalent cross-link: Glycyl lysine isopeptide (Lys-Gly) (interchain with G-Cter in ubiquitin).

This sequence belongs to the G-protein coupled receptor 4 family. As to quaternary structure, homodimer. Might also for higher order homooligomers such as homotetramers. Oligomerization is mediated significantly by transmembrane domain 1 (TMD1), possibly in concert with the N-terminal extracellular domain and TMD2. Interaction with GPA1, its dedicated G-alpha protein. Undergoes hyperphosphorylation of the C-terminal cytoplasmic domain after binding of the alpha-factor, which leads to internalization by endocytosis. Post-translationally, monoubiquitination at Lys-337 triggers internalization of STE2. In terms of processing, N-glycosylated. N-glycosylation may be involved in the sorting process for misfolded STE2 protein. As to expression, expressed in MATa strains but not in MATalpha strains.

The protein localises to the cell membrane. Fungal class D1 G-protein-coupled receptor that acts as an alpha-factor pheromone receptor performing pheromone-dependent signal transduction involved in cellular conjugation, mating projection assembly, and in cell fusion. Following alpha-factor-binding, the signal is transmitted via a tripartite G protein consisting of alpha-, beta- and gamma-subunits (GAP1, STE4 and STE8 respectively) that prepares the cell for conjugation. In the inactive state, the cytoplasmic end of transmembrane domain 7 (TMD7) is unstructured and packs between TMD1-6, blocking the G protein coupling site. Agonist binding results in the outward movement of the extracellular ends of TMD6 and TMD7 by 6 Angstroms. On the intracellular surface, the G protein coupling site is formed by a 20 Angstroms outward movement of the unstructured region in TMD7 that unblocks the site, and a 12 Angstroms inward movement of TMD6. This chain is Pheromone alpha factor receptor (STE2), found in Saccharomyces cerevisiae (strain ATCC 204508 / S288c) (Baker's yeast).